Reading from the N-terminus, the 491-residue chain is MNSPTMKSEQLTPKLSPMSFCLDDQRNAGSFQNLLNSPTKLKLDTGPIGNSLLYPTSLSKLSELSRGGRSKQRRGSDTMRSVSPIRFQFLNNTPKMLKPEYLSQTTSNLPLLSALLKNSKKTTSEGQNSNPDPLNIEKNIIKQSIKDKLEQLRSSESVAQVQKKERNPPSFEAKVCAEEPILRKNAEGLLPSYVPVPATPLEDPENHGVRKVEDKGLRVVSGGSTQCLSTEVNELPKDLNLDNLPTDNNGFVQYGLKGNNNNNRYSFISSTSTDYEPEWCDGQQHISMQMASMANAEEANSREKSNLDIKIKQLELEITELKLQNEKLVHSMTTNRYIEERFMLEVMKDPSIQAQRSQRDIERKVKQLEKKFFNCKKVLKKLTESSAVVATSTSKTEGNSARIPCPKTRLARVSVLDLKKIEEQPDSSSGTSSEEDHLTNDDTDANTSEDLNVAFEEEPTSAISTTASVQSGESKRGFQLNLPVQVEKKEK.

Residue Thr-12 is modified to Phosphothreonine. Ser-16 and Ser-37 each carry phosphoserine. A coiled-coil region spans residues 295–384; it reads NAEEANSREK…CKKVLKKLTE (90 aa). The segment at 300 to 439 is interaction with MYO2; the sequence is NSREKSNLDI…GTSSEEDHLT (140 aa). Residues 419 to 491 are disordered; it reads KKIEEQPDSS…LPVQVEKKEK (73 aa). Polar residues predominate over residues 461 to 472; sequence SAISTTASVQSG.

In terms of assembly, interacts with MYO2 and PCL7. Phosphorylated by the cyclin-CDK PCL7-PHO85.

The protein localises to the bud tip. The protein resides in the bud neck. It localises to the mitochondrion outer membrane. In terms of biological role, involved in the guiding of mitochondrial tubules to the bud tip during cell division. This chain is Mitochondrial MYO2 receptor-related protein 1 (MMR1), found in Saccharomyces cerevisiae (strain ATCC 204508 / S288c) (Baker's yeast).